The chain runs to 629 residues: Chaperone protein HtpG (629 aa).

The a; substrate-binding stretch occupies residues 1–336 (MSSTENNGTA…TEDLSLNVSR (336 aa)). Positions 337–549 (EMVQSSPVMA…KDAIDSQLER (213 aa)) are b. Residues 550 to 629 (MMKMMNTPMP…ELIEAATLTR (80 aa)) form a c region.

Belongs to the heat shock protein 90 family. Homodimer.

It is found in the cytoplasm. Functionally, molecular chaperone. Has ATPase activity. This Chlorobium chlorochromatii (strain CaD3) protein is Chaperone protein HtpG.